The following is a 24-amino-acid chain: Glutamate dehydrogenase (24 aa).

It belongs to the Glu/Leu/Phe/Val dehydrogenases family. In terms of assembly, homohexamer.

The protein resides in the cytoplasm. It carries out the reaction L-glutamate + NAD(+) + H2O = 2-oxoglutarate + NH4(+) + NADH + H(+). The catalysed reaction is L-glutamate + NADP(+) + H2O = 2-oxoglutarate + NH4(+) + NADPH + H(+). The protein is Glutamate dehydrogenase (gdhA) of Pyrococcus woesei.